Reading from the N-terminus, the 262-residue chain is Type III pantothenate kinase (262 aa).

Position 9-16 (9-16) interacts with ATP; that stretch reads DSGNTRVK. Residues Tyr93 and 100-103 contribute to the substrate site; that span reads GSDR. Asp102 serves as the catalytic Proton acceptor. Asp122 contacts K(+). Thr125 provides a ligand contact to ATP. Substrate is bound at residue Thr175.

Belongs to the type III pantothenate kinase family. Homodimer. It depends on NH4(+) as a cofactor. K(+) serves as cofactor.

The protein resides in the cytoplasm. The catalysed reaction is (R)-pantothenate + ATP = (R)-4'-phosphopantothenate + ADP + H(+). It functions in the pathway cofactor biosynthesis; coenzyme A biosynthesis; CoA from (R)-pantothenate: step 1/5. In terms of biological role, catalyzes the phosphorylation of pantothenate (Pan), the first step in CoA biosynthesis. The polypeptide is Type III pantothenate kinase (Nitrosospira multiformis (strain ATCC 25196 / NCIMB 11849 / C 71)).